The sequence spans 518 residues: 2,3-bisphosphoglycerate-independent phosphoglycerate mutase (518 aa).

2 residues coordinate Mn(2+): aspartate 14 and serine 64. Catalysis depends on serine 64, which acts as the Phosphoserine intermediate. Residues histidine 125, 155 to 156, arginine 187, arginine 193, 264 to 267, and lysine 337 each bind substrate; these read RD and RPDR. Residues aspartate 404, histidine 408, aspartate 445, histidine 446, and histidine 467 each coordinate Mn(2+).

The protein belongs to the BPG-independent phosphoglycerate mutase family. Mn(2+) serves as cofactor.

It catalyses the reaction (2R)-2-phosphoglycerate = (2R)-3-phosphoglycerate. It functions in the pathway carbohydrate degradation; glycolysis; pyruvate from D-glyceraldehyde 3-phosphate: step 3/5. Its function is as follows. Catalyzes the interconversion of 2-phosphoglycerate and 3-phosphoglycerate. This is 2,3-bisphosphoglycerate-independent phosphoglycerate mutase from Methanococcoides burtonii (strain DSM 6242 / NBRC 107633 / OCM 468 / ACE-M).